The following is a 198-amino-acid chain: 7-methyl-GTP pyrophosphatase (198 aa).

Asp-69 acts as the Proton acceptor in catalysis.

This sequence belongs to the Maf family. YceF subfamily. It depends on a divalent metal cation as a cofactor.

Its subcellular location is the cytoplasm. It catalyses the reaction N(7)-methyl-GTP + H2O = N(7)-methyl-GMP + diphosphate + H(+). In terms of biological role, nucleoside triphosphate pyrophosphatase that hydrolyzes 7-methyl-GTP (m(7)GTP). May have a dual role in cell division arrest and in preventing the incorporation of modified nucleotides into cellular nucleic acids. This Yersinia pseudotuberculosis serotype I (strain IP32953) protein is 7-methyl-GTP pyrophosphatase.